Reading from the N-terminus, the 327-residue chain is Tartrate-resistant acid phosphatase type 5 (327 aa).

Positions 1–22 are cleaved as a signal peptide; sequence MDTWMVLLGLQILLLPLLAHCT. Fe cation is bound by residues aspartate 35, aspartate 73, tyrosine 76, and asparagine 112. N-linked (GlcNAc...) asparagine glycosylation is found at asparagine 118 and asparagine 149. Cysteine 163 and cysteine 221 are disulfide-bonded. The Fe cation site is built by histidine 207, histidine 242, and histidine 244.

Exists either as monomer or, after proteolytic processing, as a dimer of two chains linked by disulfide bond(s). It depends on Fe cation as a cofactor. Characteristic constituent of osteoclasts and some mononuclear preosteoclasts. Preferentially expressed in skeletal tissues.

It localises to the lysosome. The catalysed reaction is a phosphate monoester + H2O = an alcohol + phosphate. Functionally, may play a role in the process of bone resorption. The osteoclastic trap acts on nucleotide tri- and diphosphates with higher affinity, compared with other substrates. The chain is Tartrate-resistant acid phosphatase type 5 (Acp5) from Rattus norvegicus (Rat).